The primary structure comprises 320 residues: Cytochrome f (320 aa).

Positions 1–35 (MQTRNAFSYIKEEITRSISVLLVIYIIIRAPISNA) are cleaved as a signal peptide. 4 residues coordinate heme: Tyr36, Cys56, Cys59, and His60. A helical transmembrane segment spans residues 286 to 305 (VQGLLFFLASIIFAQIFLVL).

Belongs to the cytochrome f family. In terms of assembly, the 4 large subunits of the cytochrome b6-f complex are cytochrome b6, subunit IV (17 kDa polypeptide, petD), cytochrome f and the Rieske protein, while the 4 small subunits are PetG, PetL, PetM and PetN. The complex functions as a dimer. Requires heme as cofactor.

The protein resides in the plastid. It localises to the chloroplast thylakoid membrane. In terms of biological role, component of the cytochrome b6-f complex, which mediates electron transfer between photosystem II (PSII) and photosystem I (PSI), cyclic electron flow around PSI, and state transitions. This Lotus japonicus (Lotus corniculatus var. japonicus) protein is Cytochrome f.